The sequence spans 299 residues: Acidic endochitinase Pun g 14, amyloplastic (299 aa).

The N-terminal 26 residues, 1-26, are a transit peptide targeting the amyloplast; the sequence is MAKTLPFSRALLLSLSILLVARAISA. Residues 27–299 enclose the GH18 domain; sequence GDIAIYWGQN…TYSTTIKDQV (273 aa). Cystine bridges form between cysteine 46-cysteine 93 and cysteine 76-cysteine 83. Catalysis depends on glutamate 153, which acts as the Proton donor. Cysteine 185 and cysteine 216 are disulfide-bonded.

It belongs to the glycosyl hydrolase 18 family. Chitinase class III subfamily. In terms of assembly, monomer. Highly expressed in seeds and to a lesser extent in the skin of the pomegranate fruit (at protein level). Not expressed in leaves or flesh of the fruit (at protein level).

The protein resides in the plastid. It localises to the amyloplast. The enzyme catalyses Random endo-hydrolysis of N-acetyl-beta-D-glucosaminide (1-&gt;4)-beta-linkages in chitin and chitodextrins.. Activity is not affected by addition of 10 mM Ca(2+) or removal of Ca(2+). Functionally, hydrolyzes chitin. Probable calcium storage protein of the seeds. Binds calcium ions with high capacity and low affinity. Involved in seed germination. The chain is Acidic endochitinase Pun g 14, amyloplastic from Punica granatum (Pomegranate).